The sequence spans 143 residues: Hemoglobin subunit alpha (143 aa).

An N-acetylserine modification is found at Ser-2. The region spanning 2-143 (SLSDTDKAVV…LALALSEKYR (142 aa)) is the Globin domain. Position 60 (His-60) interacts with O2. Residue His-89 coordinates heme b.

The protein belongs to the globin family. Heterotetramer of two alpha chains and two beta chains. In terms of tissue distribution, red blood cells.

Its function is as follows. Involved in oxygen transport from gills to the various peripheral tissues. The chain is Hemoglobin subunit alpha (hbaa1) from Danio rerio (Zebrafish).